We begin with the raw amino-acid sequence, 387 residues long: Pepsin II-2/3 (387 aa).

The signal sequence occupies residues Met-1 to Cys-15. Residues Ile-16–Phe-59 constitute a propeptide, activation peptide. Residues Tyr-75 to Ala-384 enclose the Peptidase A1 domain. Asp-93 is an active-site residue. A disulfide bridge connects residues Cys-106 and Cys-111. Ser-129 is modified (phosphoserine). Cys-267 and Cys-271 are disulfide-bonded. Residue Asp-276 is part of the active site. Cys-310 and Cys-343 are joined by a disulfide.

This sequence belongs to the peptidase A1 family.

It is found in the secreted. It catalyses the reaction Preferential cleavage: hydrophobic, preferably aromatic, residues in P1 and P1' positions. Cleaves 1-Phe-|-Val-2, 4-Gln-|-His-5, 13-Glu-|-Ala-14, 14-Ala-|-Leu-15, 15-Leu-|-Tyr-16, 16-Tyr-|-Leu-17, 23-Gly-|-Phe-24, 24-Phe-|-Phe-25 and 25-Phe-|-Tyr-26 bonds in the B chain of insulin.. Its function is as follows. Shows particularly broad specificity; although bonds involving phenylalanine and leucine are preferred, many others are also cleaved to some extent. This Oryctolagus cuniculus (Rabbit) protein is Pepsin II-2/3.